A 551-amino-acid polypeptide reads, in one-letter code: Solute carrier family 22 member 6 (551 aa).

The Cytoplasmic segment spans residues 1 to 23 (MAFNDLLKQVGGVGRFQRIQVTL). A helical membrane pass occupies residues 24-44 (VVLPLLLMASHNTLQNFTAAI). Topologically, residues 45-135 (PPHHCRPPAH…LVCSHRALRQ (91 aa)) are extracellular. N-linked (GlcNAc...) asparagine glycosylation is found at Asn56, Asn92, and Asn113. A helical membrane pass occupies residues 136–156 (LGQSLYMAGVLIGAMVFGYLA). At 157-164 (DRLGRRKV) the chain is on the cytoplasmic side. A helical transmembrane segment spans residues 165 to 187 (LILNYLQTAVSGTCAAFSPNFTV). Topologically, residues 188–195 (YCTFRLLS) are extracellular. The helical transmembrane segment at 196–216 (GMSLAGIALNCMTLNVEWMPI) threads the bilayer. The Cytoplasmic portion of the chain corresponds to 217-224 (HTRAYVGT). A helical transmembrane segment spans residues 225-245 (LAGYVYSTGQFLLAGVAYAVP). The Extracellular portion of the chain corresponds to 246 to 248 (HWR). The helical transmembrane segment at 249 to 269 (YLQLLVSVPFFAFFVYSWFFI) threads the bilayer. Topologically, residues 270 to 337 (ESARWYSTPG…ELLRCPALRH (68 aa)) are cytoplasmic. A helical membrane pass occupies residues 338–358 (LFLCLSLLWFATSFAYYGLVM). Topologically, residues 359–368 (DLQGFGVSIY) are extracellular. A helical transmembrane segment spans residues 369-389 (LIQVIFGAVDLPAKLVCFLVI). The Cytoplasmic portion of the chain corresponds to 390–395 (NSLGRR). The helical transmembrane segment at 396–416 (PAQMASLLLAGICILVNGVIP) threads the bilayer. Residues 417–425 (RDQSIVRTS) lie on the Extracellular side of the membrane. A helical transmembrane segment spans residues 426 to 446 (LAVLGKGCLASSFNCIFLYTG). The Cytoplasmic segment spans residues 447 to 484 (ELYPTMIRQTGLGMGSTMARVGSIVSPLVSMTSELYPS). The helical transmembrane segment at 485–505 (LPLFIYGAVPVAASAATALLP) threads the bilayer. Residues 506–551 (ETLGQPLPDTVQDLESRRRGKPRRQQQEQQKQMVPLQASVQEKNGL) are Extracellular-facing. The tract at residues 520–551 (ESRRRGKPRRQQQEQQKQMVPLQASVQEKNGL) is disordered.

Belongs to the major facilitator (TC 2.A.1) superfamily. Organic cation transporter (TC 2.A.1.19) family. In terms of processing, glycosylated. Glycosylation is necessary for proper targeting of the transporter to the plasma membrane.

It localises to the basolateral cell membrane. Its subcellular location is the basal cell membrane. The catalysed reaction is (6R)-L-erythro-5,6,7,8-tetrahydrobiopterin(out) + a dicarboxylate(in) = (6R)-L-erythro-5,6,7,8-tetrahydrobiopterin(in) + a dicarboxylate(out). The enzyme catalyses L-erythro-7,8-dihydrobiopterin(out) + a dicarboxylate(in) = L-erythro-7,8-dihydrobiopterin(in) + a dicarboxylate(out). It catalyses the reaction L-sepiapterin(out) + a dicarboxylate(in) = L-sepiapterin(in) + a dicarboxylate(out). It carries out the reaction prostaglandin F2alpha(out) + a dicarboxylate(in) = prostaglandin F2alpha(in) + a dicarboxylate(out). The catalysed reaction is prostaglandin E2(out) + a dicarboxylate(in) = prostaglandin E2(in) + a dicarboxylate(out). The enzyme catalyses 3',5'-cyclic AMP(out) + a dicarboxylate(in) = 3',5'-cyclic AMP(in) + a dicarboxylate(out). It catalyses the reaction 3',5'-cyclic GMP(out) + a dicarboxylate(in) = 3',5'-cyclic GMP(in) + a dicarboxylate(out). It carries out the reaction urate(out) + a dicarboxylate(in) = urate(in) + a dicarboxylate(out). The catalysed reaction is kynurenate(out) + glutarate(in) = kynurenate(in) + glutarate(out). The enzyme catalyses (indol-3-yl)acetate(out) + a dicarboxylate(in) = (indol-3-yl)acetate(in) + a dicarboxylate(out). It catalyses the reaction indoxyl sulfate(out) + a dicarboxylate(in) = indoxyl sulfate(in) + a dicarboxylate(out). It carries out the reaction N-benzoylglycine(out) + a dicarboxylate(in) = N-benzoylglycine(in) + a dicarboxylate(out). The catalysed reaction is 3-carboxy-4-methyl-5-propyl-2-furanpropanoate(out) + a dicarboxylate(in) = 3-carboxy-4-methyl-5-propyl-2-furanpropanoate(in) + a dicarboxylate(out). Secondary active transporter that functions as a Na(+)-independent organic anion (OA)/dicarboxylate antiporter where the uptake of one molecule of OA into the cell is coupled with an efflux of one molecule of intracellular dicarboxylate such as 2-oxoglutarate or glutarate. Mediates the uptake of OA across the basolateral side of proximal tubule epithelial cells, thereby contributing to the renal elimination of endogenous OA from the systemic circulation into the urine. Functions as a biopterin transporters involved in the uptake and the secretion of coenzymes tetrahydrobiopterin (BH4), dihydrobiopterin (BH2) and sepiapterin to urine, thereby determining baseline levels of blood biopterins. Transports prostaglandin E2 (PGE2) and prostaglandin F2-alpha (PGF2-alpha) and may contribute to their renal excretion. Also mediates the uptake of cyclic nucleotides such as cAMP and cGMP. Involved in the transport of neuroactive tryptophan metabolites kynurenate (KYNA) and xanthurenate (XA) and may contribute to their secretion from the brain. May transport glutamate. Also involved in the disposition of uremic toxins and potentially toxic xenobiotics by the renal organic anion secretory pathway, helping reduce their undesired toxicological effects on the body. Uremic toxins include the indoxyl sulfate (IS), hippurate/N-benzoylglycine (HA), indole acetate (IA), 3-carboxy-4- methyl-5-propyl-2-furanpropionate (CMPF) and urate. Xenobiotics include the mycotoxin ochratoxin (OTA). May also contribute to the transport of organic compounds in testes across the blood-testis-barrier. May also work as a bidirectional OA/dicarboxylate exchanger. The chain is Solute carrier family 22 member 6 from Oryctolagus cuniculus (Rabbit).